Here is a 491-residue protein sequence, read N- to C-terminus: Angiopoietin-related protein 1 (491 aa).

The first 23 residues, Met1–Gly23, serve as a signal peptide directing secretion. Positions Ile80–Met168 form a coiled coil. Asn160 and Asn188 each carry an N-linked (GlcNAc...) asparagine glycan. In terms of domain architecture, Fibrinogen C-terminal spans Phe271–Asp491. Disulfide bonds link Cys280–Cys309 and Cys432–Cys445.

The protein resides in the secreted. The polypeptide is Angiopoietin-related protein 1 (ANGPTL1) (Bos taurus (Bovine)).